The primary structure comprises 332 residues: 2,3-diketo-L-gulonate reductase (332 aa).

Catalysis depends on H44, which acts as the Proton donor. NAD(+)-binding positions include 168–174 (ITMVDMS), 224–225 (WK), and 304–306 (GHE).

Belongs to the LDH2/MDH2 oxidoreductase family. DlgD subfamily. As to quaternary structure, homodimer.

The protein localises to the cytoplasm. The enzyme catalyses 3-dehydro-L-gulonate + NAD(+) = 2,3-dioxo-L-gulonate + NADH + H(+). It catalyses the reaction 3-dehydro-L-gulonate + NADP(+) = 2,3-dioxo-L-gulonate + NADPH + H(+). Its function is as follows. Catalyzes the reduction of 2,3-diketo-L-gulonate in the presence of NADH, to form 3-keto-L-gulonate. This Salmonella paratyphi B (strain ATCC BAA-1250 / SPB7) protein is 2,3-diketo-L-gulonate reductase.